We begin with the raw amino-acid sequence, 259 residues long: Large ribosomal subunit protein uL3m (259 aa).

Residues 1–15 (MQSRFLISPTLIRTF) constitute a mitochondrion transit peptide. Positions 176-197 (ASHGASLSHRTPGSTGQNTTPS) are enriched in polar residues. Residues 176-208 (ASHGASLSHRTPGSTGQNTTPSRVLPGRKMAGH) form a disordered region.

The protein belongs to the universal ribosomal protein uL3 family. Component of the mitochondrial large ribosomal subunit (mt-LSU). Mature yeast 74S mitochondrial ribosomes consist of a small (37S) and a large (54S) subunit. The 37S small subunit contains a 15S ribosomal RNA (15S mt-rRNA) and at least 32 different proteins. The 54S large subunit contains a 21S rRNA (21S mt-rRNA) and at least 45 different proteins.

The protein localises to the cytoplasm. The protein resides in the mitochondrion. Functionally, component of the mitochondrial ribosome (mitoribosome), a dedicated translation machinery responsible for the synthesis of mitochondrial genome-encoded proteins, including at least some of the essential transmembrane subunits of the mitochondrial respiratory chain. The mitoribosomes are attached to the mitochondrial inner membrane and translation products are cotranslationally integrated into the membrane. The polypeptide is Large ribosomal subunit protein uL3m (mrpl9) (Schizosaccharomyces pombe (strain 972 / ATCC 24843) (Fission yeast)).